The primary structure comprises 123 residues: Chaperone protein SycN (123 aa).

As to quaternary structure, interacts with YscB to form a complex which specifically binds to YopN.

Its subcellular location is the cytoplasm. The protein resides in the cell inner membrane. Functionally, functions as a specific chaperone for YopN. It could facilitate the secretion and the subsequent translocation of YopN. This is Chaperone protein SycN (sycN) from Yersinia pseudotuberculosis serotype I (strain IP32953).